The primary structure comprises 187 residues: Endoribonuclease YbeY (187 aa).

Residues histidine 148, histidine 152, and histidine 158 each coordinate Zn(2+).

It belongs to the endoribonuclease YbeY family. Zn(2+) serves as cofactor.

The protein localises to the cytoplasm. In terms of biological role, single strand-specific metallo-endoribonuclease involved in late-stage 70S ribosome quality control and in maturation of the 3' terminus of the 16S rRNA. The sequence is that of Endoribonuclease YbeY from Ralstonia nicotianae (strain ATCC BAA-1114 / GMI1000) (Ralstonia solanacearum).